Reading from the N-terminus, the 325-residue chain is tRNA uridine(34) hydroxylase (325 aa).

The 97-residue stretch at 122 to 218 (EENRCLVLDV…YGQAMGTGKW (97 aa)) folds into the Rhodanese domain. C178 serves as the catalytic Cysteine persulfide intermediate.

This sequence belongs to the TrhO family.

The catalysed reaction is uridine(34) in tRNA + AH2 + O2 = 5-hydroxyuridine(34) in tRNA + A + H2O. Its function is as follows. Catalyzes oxygen-dependent 5-hydroxyuridine (ho5U) modification at position 34 in tRNAs. The polypeptide is tRNA uridine(34) hydroxylase (Chlamydia felis (strain Fe/C-56) (Chlamydophila felis)).